We begin with the raw amino-acid sequence, 170 residues long: NADH-quinone oxidoreductase subunit B (170 aa).

Cys37, Cys38, Cys102, and Cys131 together coordinate [4Fe-4S] cluster.

This sequence belongs to the complex I 20 kDa subunit family. As to quaternary structure, NDH-1 is composed of 14 different subunits. Subunits NuoB, C, D, E, F, and G constitute the peripheral sector of the complex. Requires [4Fe-4S] cluster as cofactor.

It is found in the cell inner membrane. It carries out the reaction a quinone + NADH + 5 H(+)(in) = a quinol + NAD(+) + 4 H(+)(out). NDH-1 shuttles electrons from NADH, via FMN and iron-sulfur (Fe-S) centers, to quinones in the respiratory chain. The immediate electron acceptor for the enzyme in this species is believed to be ubiquinone. Couples the redox reaction to proton translocation (for every two electrons transferred, four hydrogen ions are translocated across the cytoplasmic membrane), and thus conserves the redox energy in a proton gradient. The sequence is that of NADH-quinone oxidoreductase subunit B from Geotalea uraniireducens (strain Rf4) (Geobacter uraniireducens).